Here is a 171-residue protein sequence, read N- to C-terminus: 3-hydroxydecanoyl-[acyl-carrier-protein] dehydratase (171 aa).

Residue H70 is part of the active site.

The protein belongs to the thioester dehydratase family. FabA subfamily. Homodimer.

It localises to the cytoplasm. The enzyme catalyses a (3R)-hydroxyacyl-[ACP] = a (2E)-enoyl-[ACP] + H2O. The catalysed reaction is (3R)-hydroxydecanoyl-[ACP] = (2E)-decenoyl-[ACP] + H2O. It carries out the reaction (2E)-decenoyl-[ACP] = (3Z)-decenoyl-[ACP]. It functions in the pathway lipid metabolism; fatty acid biosynthesis. In terms of biological role, necessary for the introduction of cis unsaturation into fatty acids. Catalyzes the dehydration of (3R)-3-hydroxydecanoyl-ACP to E-(2)-decenoyl-ACP and then its isomerization to Z-(3)-decenoyl-ACP. Can catalyze the dehydratase reaction for beta-hydroxyacyl-ACPs with saturated chain lengths up to 16:0, being most active on intermediate chain length. The chain is 3-hydroxydecanoyl-[acyl-carrier-protein] dehydratase from Marinomonas sp. (strain MWYL1).